The chain runs to 412 residues: Tryptophan 2,3-dioxygenase (412 aa).

Residues 79–83 (FIVVH), Tyr146, and Arg150 each bind substrate. His346 is a heme binding site. Thr360 is a binding site for substrate.

The protein belongs to the tryptophan 2,3-dioxygenase family. As to quaternary structure, homotetramer. Requires heme as cofactor.

It catalyses the reaction L-tryptophan + O2 = N-formyl-L-kynurenine. It participates in amino-acid degradation; L-tryptophan degradation via kynurenine pathway; L-kynurenine from L-tryptophan: step 1/2. Its function is as follows. Heme-dependent dioxygenase that catalyzes the oxidative cleavage of the L-tryptophan (L-Trp) pyrrole ring and converts L-tryptophan to N-formyl-L-kynurenine. Catalyzes the oxidative cleavage of the indole moiety. The protein is Tryptophan 2,3-dioxygenase of Sorangium cellulosum (strain So ce56) (Polyangium cellulosum (strain So ce56)).